The sequence spans 1242 residues: von Willebrand factor A domain-containing protein 5B2 (1242 aa).

Residues 1 to 138 (MPGLYCPSSW…TMTVTLHSSR (138 aa)) form the VIT domain. A VWFA domain is found at 354–527 (ELLFLLDSSS…KALEPALSDI (174 aa)). Disordered stretches follow at residues 569–650 (SRPP…SDTA), 670–726 (CSAS…CPLP), 751–794 (LAGR…GQGL), 957–976 (CSSE…SHLD), 987–1055 (KGLQ…GSDH), and 1118–1159 (QGDS…GLGG). The span at 588-604 (PSPEEAPSAASPGTEPT) shows a compositional bias: low complexity. A compositionally biased stretch (polar residues) spans 605–619 (GTSEPLGTGTVSAEL). The segment covering 681–700 (TGSSESPGSQGPGSPEGSAP) has biased composition (low complexity). Residues 1125-1138 (SCSPSPSSGSEGPG) show a composition bias toward low complexity.

The chain is von Willebrand factor A domain-containing protein 5B2 (VWA5B2) from Homo sapiens (Human).